Consider the following 308-residue polypeptide: Glycine--tRNA ligase alpha subunit (308 aa).

This sequence belongs to the class-II aminoacyl-tRNA synthetase family. In terms of assembly, tetramer of two alpha and two beta subunits.

The protein resides in the cytoplasm. The enzyme catalyses tRNA(Gly) + glycine + ATP = glycyl-tRNA(Gly) + AMP + diphosphate. This chain is Glycine--tRNA ligase alpha subunit, found in Brucella canis (strain ATCC 23365 / NCTC 10854 / RM-666).